Consider the following 237-residue polypeptide: Bax inhibitor 1 (237 aa).

Over 1–29 (MNIFDRKINFDALLKFSHITPSTQQHLKK) the chain is Cytoplasmic. Lys-7 is covalently cross-linked (Glycyl lysine isopeptide (Lys-Gly) (interchain with G-Cter in ubiquitin)). Residues 30 to 50 (VYASFALCMFVAAAGAYVHVV) form a helical membrane-spanning segment. Over 51–52 (TR) the chain is Lumenal. Residues 53–73 (FIQAGLLSALGALALMICLMA) traverse the membrane as a helical segment. At 74 to 86 (TPHSHETEQKRLG) the chain is on the cytoplasmic side. A helical membrane pass occupies residues 87 to 107 (LLAGFAFLTGVGLGPALELCI). Residues 108–112 (AINPS) lie on the Lumenal side of the membrane. The helical transmembrane segment at 113–133 (ILPTAFMGTAMIFTCFSLSAL) threads the bilayer. Over 134 to 139 (YARRRS) the chain is Cytoplasmic. Residues 140-160 (YLFLGGILMSAMSLMFVSSLG) traverse the membrane as a helical segment. Topologically, residues 161-166 (NLFFGS) are lumenal. The chain crosses the membrane as a helical span at residues 167–187 (IWLFQANLYMGLLVMCGFVLF). Topologically, residues 188 to 206 (DTQLIIEKAEHGDKDYIWH) are cytoplasmic. The segment at residues 207–227 (CIDLFLDFVTLFRKLMLILAF) is an intramembrane region (helical). Residues 228–237 (NEKDKKKEKK) are Cytoplasmic-facing.

Belongs to the BI1 family. Interacts with BCL2 and BCL2L1. Interacts with ERN1. Post-translationally, ubiquitinated by BFAR, leading to proteasomal degradation. Highly abundant in adult testis.

It localises to the endoplasmic reticulum membrane. Endoplasmic reticulum (ER)-resident protein that confers cellular protection as an anti-apoptotic protein by limiting multiple stress-inducing pathways surrounding the endoplasmic reticulum and mitochondria. Inhibits the activities of the key sensor for the endoplasmic reticulum unfolded protein response IRE1alpha/ERN1 both directly and by blocking BAX/BAK binding. Modulates ER calcium homeostasis by acting as a calcium-leak channel. Negatively regulates autophagy and autophagosome formation, especially during periods of nutrient deprivation, and reduces cell survival during starvation. The protein is Bax inhibitor 1 (Tmbim6) of Rattus norvegicus (Rat).